We begin with the raw amino-acid sequence, 247 residues long: MESSSTIDPAEVAKFEAMAAEWWNPHGKFKPLHQMNPCRLDYITQQIAAEFDRDLSAPLPFEGLRLLDIGCGGGLLSEPMARLGAEVIGADAAPRNIPVAKLHAEQSGLTIDYRNTTAEALAAAGERFDVVLNMEVVEHVADPLTYLTACRELLKPGGLMICSTLNRNPKSFAMAIVGAEWVMRWLPKGTHDWSKFITPDELYDLIRKAGLDPVDRKGMVFNPVSWSWSLSARDLSVNYVTASVRRS.

Residues Arg39, Gly70, Asp91, and Met134 each coordinate S-adenosyl-L-methionine.

It belongs to the methyltransferase superfamily. UbiG/COQ3 family.

It carries out the reaction a 3-demethylubiquinol + S-adenosyl-L-methionine = a ubiquinol + S-adenosyl-L-homocysteine + H(+). It catalyses the reaction a 3-(all-trans-polyprenyl)benzene-1,2-diol + S-adenosyl-L-methionine = a 2-methoxy-6-(all-trans-polyprenyl)phenol + S-adenosyl-L-homocysteine + H(+). It functions in the pathway cofactor biosynthesis; ubiquinone biosynthesis. O-methyltransferase that catalyzes the 2 O-methylation steps in the ubiquinone biosynthetic pathway. The sequence is that of Ubiquinone biosynthesis O-methyltransferase from Cereibacter sphaeroides (strain ATCC 17023 / DSM 158 / JCM 6121 / CCUG 31486 / LMG 2827 / NBRC 12203 / NCIMB 8253 / ATH 2.4.1.) (Rhodobacter sphaeroides).